We begin with the raw amino-acid sequence, 536 residues long: Membrane protein insertase YidC (536 aa).

A helical membrane pass occupies residues 14–34 (ILIATAISLLFFIPYSYFFAP). A disordered region spans residues 43–69 (STSMERAEQQAAPQTSSSPKEGQVSSV). A compositionally biased stretch (polar residues) spans 53 to 68 (AAPQTSSSPKEGQVSS). 5 helical membrane-spanning segments follow: residues 312–332 (VVEY…LDWL), 339–359 (WGWA…PLTY), 401–421 (GANP…FFAI), 436–456 (WILW…PILM), and 484–504 (PLIF…YWFV).

Belongs to the OXA1/ALB3/YidC family. Type 1 subfamily. As to quaternary structure, interacts with the Sec translocase complex via SecD. Specifically interacts with transmembrane segments of nascent integral membrane proteins during membrane integration.

It localises to the cell inner membrane. Required for the insertion and/or proper folding and/or complex formation of integral membrane proteins into the membrane. Involved in integration of membrane proteins that insert both dependently and independently of the Sec translocase complex, as well as at least some lipoproteins. Aids folding of multispanning membrane proteins. The chain is Membrane protein insertase YidC from Wolinella succinogenes (strain ATCC 29543 / DSM 1740 / CCUG 13145 / JCM 31913 / LMG 7466 / NCTC 11488 / FDC 602W) (Vibrio succinogenes).